Reading from the N-terminus, the 503-residue chain is Lysine--tRNA ligase (503 aa).

Mg(2+) contacts are provided by Glu-413 and Glu-420.

The protein belongs to the class-II aminoacyl-tRNA synthetase family. Homodimer. Requires Mg(2+) as cofactor.

It is found in the cytoplasm. It catalyses the reaction tRNA(Lys) + L-lysine + ATP = L-lysyl-tRNA(Lys) + AMP + diphosphate. This Mannheimia succiniciproducens (strain KCTC 0769BP / MBEL55E) protein is Lysine--tRNA ligase.